We begin with the raw amino-acid sequence, 757 residues long: 5-methyltetrahydropteroyltriglutamate--homocysteine methyltransferase (757 aa).

5-methyltetrahydropteroyltri-L-glutamate-binding positions include Arg15 to Lys18 and Lys114. L-homocysteine-binding positions include Ile428–Ser430 and Glu481. Residues Ile428 to Ser430 and Glu481 each bind L-methionine. Residues Arg512–Cys513 and Trp558 contribute to the 5-methyltetrahydropteroyltri-L-glutamate site. Residue Asp596 coordinates L-homocysteine. Asp596 is an L-methionine binding site. Glu602 is a 5-methyltetrahydropteroyltri-L-glutamate binding site. Residues His639, Cys641, and Glu663 each contribute to the Zn(2+) site. The Proton donor role is filled by His692. Zn(2+) is bound at residue Cys724.

Belongs to the vitamin-B12 independent methionine synthase family. Zn(2+) serves as cofactor.

The catalysed reaction is 5-methyltetrahydropteroyltri-L-glutamate + L-homocysteine = tetrahydropteroyltri-L-glutamate + L-methionine. The protein operates within amino-acid biosynthesis; L-methionine biosynthesis via de novo pathway; L-methionine from L-homocysteine (MetE route): step 1/1. In terms of biological role, catalyzes the transfer of a methyl group from 5-methyltetrahydrofolate to homocysteine resulting in methionine formation. The protein is 5-methyltetrahydropteroyltriglutamate--homocysteine methyltransferase of Lactococcus lactis subsp. cremoris (strain SK11).